A 39-amino-acid polypeptide reads, in one-letter code: Small basic protein 1 (39 aa).

The residue at position 1 (Gln1) is a Pyrrolidone carboxylic acid. Intrachain disulfides connect Cys6–Cys32, Cys10–Cys26, and Cys14–Cys31.

It is found in the secreted. The polypeptide is Small basic protein 1 (Anas platyrhynchos (Mallard)).